The primary structure comprises 240 residues: MAPQVDVLINKQILIERALVCVTTRITKAIAERGQGTIALSGGNTPKPLYEALARQALPWEKIHVFWGDERYVSVDHPDSNQRMARLAWLDQVDIPEANIHPMPTAAADPEQDAQTYENELATFFQVEAGHFPAFDLILLGLGDDGHTASLFPHTPALTVGDRLITVGNKDGQPRLTFTIPLINRARSVVFLVAGASKQHALGEIFAPEADPQQYPARFIQPQGELIWLLDQQAGENLRP.

It belongs to the glucosamine/galactosamine-6-phosphate isomerase family. 6-phosphogluconolactonase subfamily.

It carries out the reaction 6-phospho-D-glucono-1,5-lactone + H2O = 6-phospho-D-gluconate + H(+). The protein operates within carbohydrate degradation; pentose phosphate pathway; D-ribulose 5-phosphate from D-glucose 6-phosphate (oxidative stage): step 2/3. Functionally, hydrolysis of 6-phosphogluconolactone to 6-phosphogluconate. The polypeptide is 6-phosphogluconolactonase (pgl) (Synechocystis sp. (strain ATCC 27184 / PCC 6803 / Kazusa)).